The sequence spans 699 residues: Elongation factor G (699 aa).

The 281-residue stretch at 8 to 288 (EDYRNFGIMA…AVVDYLPSPL (281 aa)) folds into the tr-type G domain. GTP contacts are provided by residues 17-24 (AHIDAGKT), 86-90 (DTPGH), and 140-143 (NKMD).

The protein belongs to the TRAFAC class translation factor GTPase superfamily. Classic translation factor GTPase family. EF-G/EF-2 subfamily.

The protein localises to the cytoplasm. Its function is as follows. Catalyzes the GTP-dependent ribosomal translocation step during translation elongation. During this step, the ribosome changes from the pre-translocational (PRE) to the post-translocational (POST) state as the newly formed A-site-bound peptidyl-tRNA and P-site-bound deacylated tRNA move to the P and E sites, respectively. Catalyzes the coordinated movement of the two tRNA molecules, the mRNA and conformational changes in the ribosome. In Rhizobium etli (strain ATCC 51251 / DSM 11541 / JCM 21823 / NBRC 15573 / CFN 42), this protein is Elongation factor G.